The primary structure comprises 118 residues: DNA mimic protein DMP12 (118 aa).

This sequence belongs to the DMP12-like protein family. As to quaternary structure, monomer. Interacts with the dimeric form of the DNA-binding protein HU.

In terms of biological role, acts as a DNA mimic. Interacts with the DNA-binding protein HU and partially prevents the binding of HU protein to DNA by occupying the DNA binding sites on the protein. However, the relatively weak affinity of DMP12 for HU suggests that it may not completely block the HU protein-DNA binding, and that DMP12 is more likely to act as a regulator than a competitive inhibitor. It protects HU protein from limited digestion by trypsin in a limited trypsin digestion assay, suggesting that it may serve to protect the HU protein and improve the stability of unbound HU protein. The chain is DNA mimic protein DMP12 from Neisseria meningitidis serogroup B (strain ATCC BAA-335 / MC58).